A 346-amino-acid polypeptide reads, in one-letter code: tRNA N6-adenosine threonylcarbamoyltransferase (346 aa).

His111 and His115 together coordinate Fe cation. Substrate contacts are provided by residues 134–138, Asp167, Gly180, and Asn279; that span reads LVSGG. Asp307 serves as a coordination point for Fe cation.

The protein belongs to the KAE1 / TsaD family. Requires Fe(2+) as cofactor.

It localises to the cytoplasm. The enzyme catalyses L-threonylcarbamoyladenylate + adenosine(37) in tRNA = N(6)-L-threonylcarbamoyladenosine(37) in tRNA + AMP + H(+). Its function is as follows. Required for the formation of a threonylcarbamoyl group on adenosine at position 37 (t(6)A37) in tRNAs that read codons beginning with adenine. Is involved in the transfer of the threonylcarbamoyl moiety of threonylcarbamoyl-AMP (TC-AMP) to the N6 group of A37, together with TsaE and TsaB. TsaD likely plays a direct catalytic role in this reaction. The protein is tRNA N6-adenosine threonylcarbamoyltransferase of Burkholderia ambifaria (strain ATCC BAA-244 / DSM 16087 / CCUG 44356 / LMG 19182 / AMMD) (Burkholderia cepacia (strain AMMD)).